A 117-amino-acid chain; its full sequence is uncharacterized protein (117 aa).

The chain crosses the membrane as a helical span at residues 1-21 (MEIAIIALFIVSIALIAFSYS). The stretch at 38-67 (LSAMQEIYKLKKKMTVLEEELLETNLVIRK) forms a coiled coil.

Its subcellular location is the cell membrane. This is an uncharacterized protein from Bacillus subtilis (strain 168).